We begin with the raw amino-acid sequence, 473 residues long: MFS transporter prlG (473 aa).

Positions M1–E12 are enriched in basic and acidic residues. The segment at M1–N27 is disordered. Residues A13–P22 show a composition bias toward acidic residues. 11 helical membrane passes run V37–G57, I71–L91, L101–S121, A125–G145, A163–V183, W191–M211, P266–F286, G305–L325, L345–S365, W372–P392, and A409–P429.

This sequence belongs to the major facilitator superfamily.

It is found in the cell membrane. Efflux pump that might be required for efficient secretion of pyrrolocin or other secondary metabolies produced by the pyrrolocin gene cluster. This is MFS transporter prlG from Fungal sp. (strain NRRL 50135).